A 426-amino-acid polypeptide reads, in one-letter code: Gamma-glutamyl phosphate reductase (426 aa).

This sequence belongs to the gamma-glutamyl phosphate reductase family.

Its subcellular location is the cytoplasm. The catalysed reaction is L-glutamate 5-semialdehyde + phosphate + NADP(+) = L-glutamyl 5-phosphate + NADPH + H(+). It functions in the pathway amino-acid biosynthesis; L-proline biosynthesis; L-glutamate 5-semialdehyde from L-glutamate: step 2/2. Its function is as follows. Catalyzes the NADPH-dependent reduction of L-glutamate 5-phosphate into L-glutamate 5-semialdehyde and phosphate. The product spontaneously undergoes cyclization to form 1-pyrroline-5-carboxylate. This Delftia acidovorans (strain DSM 14801 / SPH-1) protein is Gamma-glutamyl phosphate reductase.